We begin with the raw amino-acid sequence, 175 residues long: Ribosome maturation factor RimM (175 aa).

One can recognise a PRC barrel domain in the interval Glu96–Phe175.

This sequence belongs to the RimM family. As to quaternary structure, binds ribosomal protein uS19.

The protein resides in the cytoplasm. In terms of biological role, an accessory protein needed during the final step in the assembly of 30S ribosomal subunit, possibly for assembly of the head region. Essential for efficient processing of 16S rRNA. May be needed both before and after RbfA during the maturation of 16S rRNA. It has affinity for free ribosomal 30S subunits but not for 70S ribosomes. This chain is Ribosome maturation factor RimM, found in Aliivibrio fischeri (strain ATCC 700601 / ES114) (Vibrio fischeri).